A 497-amino-acid polypeptide reads, in one-letter code: Glycerol kinase (497 aa).

An ADP-binding site is contributed by T11. T11, T12, and S13 together coordinate ATP. T11 serves as a coordination point for sn-glycerol 3-phosphate. R15 is a binding site for ADP. Residues R81, E82, Y133, and D242 each coordinate sn-glycerol 3-phosphate. Residues R81, E82, Y133, D242, and Q243 each coordinate glycerol. ADP-binding residues include T264 and G306. T264, G306, Q310, and G407 together coordinate ATP. 2 residues coordinate ADP: G407 and N411.

This sequence belongs to the FGGY kinase family.

It catalyses the reaction glycerol + ATP = sn-glycerol 3-phosphate + ADP + H(+). It participates in polyol metabolism; glycerol degradation via glycerol kinase pathway; sn-glycerol 3-phosphate from glycerol: step 1/1. With respect to regulation, inhibited by fructose 1,6-bisphosphate (FBP). Functionally, key enzyme in the regulation of glycerol uptake and metabolism. Catalyzes the phosphorylation of glycerol to yield sn-glycerol 3-phosphate. This Alcanivorax borkumensis (strain ATCC 700651 / DSM 11573 / NCIMB 13689 / SK2) protein is Glycerol kinase.